A 398-amino-acid polypeptide reads, in one-letter code: S-adenosylmethionine synthase (398 aa).

Histidine 16 is a binding site for ATP. Aspartate 18 is a binding site for Mg(2+). K(+) is bound at residue glutamate 51. L-methionine contacts are provided by glutamate 64 and glutamine 108. The tract at residues 108 to 118 (QSADIAQGVDA) is flexible loop. Residues 176–178 (DSK), 242–243 (KF), aspartate 251, 257–258 (RK), alanine 274, and lysine 278 each bind ATP. Aspartate 251 contributes to the L-methionine binding site. L-methionine is bound at residue lysine 282.

Belongs to the AdoMet synthase family. As to quaternary structure, homotetramer; dimer of dimers. It depends on Mg(2+) as a cofactor. K(+) is required as a cofactor.

The protein resides in the cytoplasm. The enzyme catalyses L-methionine + ATP + H2O = S-adenosyl-L-methionine + phosphate + diphosphate. It functions in the pathway amino-acid biosynthesis; S-adenosyl-L-methionine biosynthesis; S-adenosyl-L-methionine from L-methionine: step 1/1. In terms of biological role, catalyzes the formation of S-adenosylmethionine (AdoMet) from methionine and ATP. The overall synthetic reaction is composed of two sequential steps, AdoMet formation and the subsequent tripolyphosphate hydrolysis which occurs prior to release of AdoMet from the enzyme. This is S-adenosylmethionine synthase from Rhodopseudomonas palustris (strain HaA2).